The following is a 250-amino-acid chain: CCN family member 5 (250 aa).

Positions 1-23 (MRGSPLIRLLATSFLCLLSMVCA) are cleaved as a signal peptide. 6 cysteine pairs are disulfide-bonded: Cys-22–Cys-50, Cys-26–Cys-52, Cys-32–Cys-53, Cys-39–Cys-56, Cys-64–Cys-78, and Cys-70–Cys-100. One can recognise an IGFBP N-terminal domain in the interval 24-103 (QLCRTPCTCP…DEDDGDCEVN (80 aa)). In terms of domain architecture, VWFC spans 98 to 164 (GDCEVNGRRY…GKCCPEWVCD (67 aa)). The TSP type-1 domain maps to 194–238 (WPNWSTAWGPCSTTCGLGIATRVSNQNRFCQLEIQRRLCLPRPCL). Asn-196 carries an N-linked (GlcNAc...) asparagine glycan.

This sequence belongs to the CCN family.

Its subcellular location is the secreted. In terms of biological role, may play an important role in modulating bone turnover. Promotes the adhesion of osteoblast cells and inhibits the binding of fibrinogen to integrin receptors. In addition, inhibits osteocalcin production. In Rattus norvegicus (Rat), this protein is CCN family member 5 (Ccn5).